Reading from the N-terminus, the 248-residue chain is 4-hydroxy-tetrahydrodipicolinate reductase (248 aa).

Residues 8-13, 75-77, and 99-102 contribute to the NAD(+) site; these read GAKGRM, GTT, and ATNM. Catalysis depends on histidine 131, which acts as the Proton donor/acceptor. Histidine 132 contacts (S)-2,3,4,5-tetrahydrodipicolinate. The Proton donor role is filled by lysine 135. Residue 141 to 142 participates in (S)-2,3,4,5-tetrahydrodipicolinate binding; it reads GT.

This sequence belongs to the DapB family.

The protein localises to the cytoplasm. The catalysed reaction is (S)-2,3,4,5-tetrahydrodipicolinate + NAD(+) + H2O = (2S,4S)-4-hydroxy-2,3,4,5-tetrahydrodipicolinate + NADH + H(+). It carries out the reaction (S)-2,3,4,5-tetrahydrodipicolinate + NADP(+) + H2O = (2S,4S)-4-hydroxy-2,3,4,5-tetrahydrodipicolinate + NADPH + H(+). The protein operates within amino-acid biosynthesis; L-lysine biosynthesis via DAP pathway; (S)-tetrahydrodipicolinate from L-aspartate: step 4/4. Catalyzes the conversion of 4-hydroxy-tetrahydrodipicolinate (HTPA) to tetrahydrodipicolinate. This Campylobacter jejuni subsp. doylei (strain ATCC BAA-1458 / RM4099 / 269.97) protein is 4-hydroxy-tetrahydrodipicolinate reductase.